The primary structure comprises 105 residues: Ferredoxin-2 (105 aa).

Residues 4–94 (YQVEVIYQGQ…DLKIETHKED (91 aa)) form the 2Fe-2S ferredoxin-type domain. Residues cysteine 40, cysteine 45, cysteine 48, and cysteine 78 each contribute to the [2Fe-2S] cluster site.

It belongs to the 2Fe2S plant-type ferredoxin family. In terms of assembly, forms a complex with heterodimeric ferredoxin-thioredoxin reductase (FTR) and thioredoxin. The cofactor is [2Fe-2S] cluster.

In terms of biological role, ferredoxins are iron-sulfur proteins that transfer electrons in a wide variety of metabolic reactions. This chain is Ferredoxin-2 (petF2), found in Synechococcus sp. (strain ATCC 27144 / PCC 6301 / SAUG 1402/1) (Anacystis nidulans).